Reading from the N-terminus, the 247-residue chain is GTP cyclohydrolase 1 type 2 homolog (247 aa).

Residues His63, His64, Asp101, His215, and Glu219 each coordinate a divalent metal cation.

This sequence belongs to the GTP cyclohydrolase I type 2/NIF3 family. As to quaternary structure, toroid-shaped homohexamer. In the hexamer, 3 dimers assemble to form a ring-like structure surrounding a central hole.

Its function is as follows. Provides significant protection from radiation damage and may be involved in the degradation of radiation-damaged nucleotides. This is GTP cyclohydrolase 1 type 2 homolog (ybgI) from Salmonella typhi.